The primary structure comprises 389 residues: S-adenosylmethionine synthase (389 aa).

His-15 is a binding site for ATP. Asp-17 is a Mg(2+) binding site. Position 43 (Glu-43) interacts with K(+). Residues Glu-56 and Gln-99 each coordinate L-methionine. Residues 99-109 form a flexible loop region; it reads QSPDIAQGVNE. ATP-binding positions include 166–168, 234–235, Asp-243, 249–250, Ala-266, and Lys-270; these read DAK, RF, and RK. Residue Asp-243 participates in L-methionine binding. Position 274 (Lys-274) interacts with L-methionine.

Belongs to the AdoMet synthase family. In terms of assembly, homotetramer; dimer of dimers. Mg(2+) serves as cofactor. It depends on K(+) as a cofactor.

The protein localises to the cytoplasm. The enzyme catalyses L-methionine + ATP + H2O = S-adenosyl-L-methionine + phosphate + diphosphate. Its pathway is amino-acid biosynthesis; S-adenosyl-L-methionine biosynthesis; S-adenosyl-L-methionine from L-methionine: step 1/1. Functionally, catalyzes the formation of S-adenosylmethionine (AdoMet) from methionine and ATP. The overall synthetic reaction is composed of two sequential steps, AdoMet formation and the subsequent tripolyphosphate hydrolysis which occurs prior to release of AdoMet from the enzyme. The sequence is that of S-adenosylmethionine synthase from Neisseria meningitidis serogroup A / serotype 4A (strain DSM 15465 / Z2491).